The sequence spans 463 residues: L-seryl-tRNA(Sec) selenium transferase (463 aa).

Lys295 bears the N6-(pyridoxal phosphate)lysine mark.

Belongs to the SelA family. Homodecamer; pentamer of dimers. Binds only one seryl-tRNA(Sec) per dimer. Pyridoxal 5'-phosphate serves as cofactor.

The protein localises to the cytoplasm. The catalysed reaction is L-seryl-tRNA(Sec) + selenophosphate + H(+) = L-selenocysteinyl-tRNA(Sec) + phosphate. The protein operates within aminoacyl-tRNA biosynthesis; selenocysteinyl-tRNA(Sec) biosynthesis; selenocysteinyl-tRNA(Sec) from L-seryl-tRNA(Sec) (bacterial route): step 1/1. In terms of biological role, converts seryl-tRNA(Sec) to selenocysteinyl-tRNA(Sec) required for selenoprotein biosynthesis. In Escherichia coli O127:H6 (strain E2348/69 / EPEC), this protein is L-seryl-tRNA(Sec) selenium transferase.